The sequence spans 553 residues: Neutral amino acid transporter B(0) (553 aa).

An N-acetylmethionine modification is found at Met-1. At Met-1–Ala-50 the chain is on the cytoplasmic side. Residues Asn-51–Leu-80 traverse the membrane as a helical segment. At Gly-81–Glu-93 the chain is on the extracellular side. Residues Leu-94–Ala-115 traverse the membrane as a helical segment. At Ala-116–Trp-129 the chain is on the cytoplasmic side. Residues Ala-130–Leu-152 form a helical membrane-spanning segment. The Extracellular portion of the chain corresponds to Lys-153 to Cys-236. Residues Asn-165 and Asn-228 are each glycosylated (N-linked (GlcNAc...) asparagine). Residues Glu-237 to Leu-260 form a helical membrane-spanning segment. The Cytoplasmic portion of the chain corresponds to Gly-261–Arg-269. Residues Phe-270–Val-297 form a helical membrane-spanning segment. The Extracellular segment spans residues Ala-298–Ile-318. The chain crosses the membrane as a helical span at residues Leu-319 to Phe-340. The Cytoplasmic portion of the chain corresponds to Thr-341–Pro-345. Residues Tyr-346 to Val-376 constitute an intramembrane region (discontinuously helical). Over Glu-377–His-385 the chain is Cytoplasmic. A helical membrane pass occupies residues Ile-386–Phe-412. Residues Gly-394, Thr-396, and Asn-398 each coordinate Na(+). Residues Ile-413–Lys-425 lie on the Extracellular side of the membrane. Residues Ile-426–Ser-459 constitute an intramembrane region (discontinuously helical). Topologically, residues Leu-460–Asp-472 are extracellular. Residues Trp-473 to Leu-494 form a helical membrane-spanning segment. Positions 483 and 487 each coordinate Na(+). Topologically, residues Gln-495–Met-553 are cytoplasmic. Ser-505, Ser-506, Ser-518, Ser-543, and Ser-551 each carry phosphoserine. The tract at residues Pro-531 to Met-553 is disordered. The span at Gln-537–Thr-546 shows a compositional bias: polar residues.

It belongs to the dicarboxylate/amino acid:cation symporter (DAACS) (TC 2.A.23) family. SLC1A5 subfamily. As to quaternary structure, homotrimer. In terms of tissue distribution, highly expressed in adipose tissue. Detected in lung, skeletal muscle, large intestine, kidney and testis. Expressed in lung, brain, kidney and neural retina (at protein level). Expressed in Mueller cells (at protein level).

It is found in the cell membrane. The protein localises to the melanosome. It carries out the reaction L-glutamine(out) + L-serine(in) + Na(+)(out) = L-glutamine(in) + L-serine(out) + Na(+)(in). The catalysed reaction is L-glutamine(in) + L-serine(out) + Na(+)(out) = L-glutamine(out) + L-serine(in) + Na(+)(in). It catalyses the reaction L-threonine(in) + L-glutamine(out) + Na(+)(out) = L-threonine(out) + L-glutamine(in) + Na(+)(in). The enzyme catalyses L-threonine(out) + L-glutamine(in) + Na(+)(out) = L-threonine(in) + L-glutamine(out) + Na(+)(in). It carries out the reaction L-asparagine(in) + L-glutamine(out) + Na(+)(out) = L-asparagine(out) + L-glutamine(in) + Na(+)(in). The catalysed reaction is L-asparagine(out) + L-glutamine(in) + Na(+)(out) = L-asparagine(in) + L-glutamine(out) + Na(+)(in). It catalyses the reaction L-glutamine(in) + L-alanine(out) + Na(+)(out) = L-glutamine(out) + L-alanine(in) + Na(+)(in). The enzyme catalyses L-valine(out) + L-glutamine(in) + Na(+)(out) = L-valine(in) + L-glutamine(out) + Na(+)(in). It carries out the reaction L-glutamine(in) + L-methionine(out) + Na(+)(out) = L-glutamine(out) + L-methionine(in) + Na(+)(in). The catalysed reaction is L-glutamine(in) + L-glutamate(out) + Na(+)(out) + H(+)(out) = L-glutamine(out) + L-glutamate(in) + Na(+)(in) + H(+)(in). It catalyses the reaction D-serine(in) + L-glutamine(out) + Na(+)(out) = D-serine(out) + L-glutamine(in) + Na(+)(in). The enzyme catalyses D-serine(in) + L-alanine(out) + Na(+)(out) = D-serine(out) + L-alanine(in) + Na(+)(in). It carries out the reaction nitrate(in) = nitrate(out). The catalysed reaction is iodide(out) = iodide(in). It catalyses the reaction thiocyanate(in) = thiocyanate(out). With respect to regulation, down-regulated at acidic pH, with the exception of L-glutamate transport which is up-regulated instead. Its function is as follows. Sodium-coupled antiporter of neutral amino acids. In a tri-substrate transport cycle, exchanges neutral amino acids between the extracellular and intracellular compartments, coupled to the inward cotransport of at least one sodium ion. The preferred substrate is the essential amino acid L-glutamine, a precursor for biosynthesis of proteins, nucleotides and amine sugars as well as an alternative fuel for mitochondrial oxidative phosphorylation. Exchanges L-glutamine with other neutral amino acids such as L-serine, L-threonine and L-asparagine in a bidirectional way. Provides L-glutamine to proliferating stem and activated cells driving the metabolic switch toward cell differentiation. The transport cycle is usually pH-independent, with the exception of L-glutamate. Transports extracellular L-glutamate coupled to the cotransport of one proton and one sodium ion in exchange for intracellular L-glutamine counter-ion. May provide for L-glutamate uptake in glial cells regulating glutamine/glutamate cycle in the nervous system. Can transport D-amino acids. Mediates D-serine release from the retinal glia potentially affecting NMDA receptor function in retinal neurons. Displays sodium- and amino acid-dependent but uncoupled channel-like anion conductance with a preference SCN(-) &gt;&gt; NO3(-) &gt; I(-) &gt; Cl(-). Through binding of the fusogenic protein syncytin-1/ERVW-1 may mediate trophoblasts syncytialization, the spontaneous fusion of their plasma membranes, an essential process in placental development. In Mus musculus (Mouse), this protein is Neutral amino acid transporter B(0) (Slc1a5).